We begin with the raw amino-acid sequence, 318 residues long: MMLWQATPASLWQGRDDSAEAPNALRLFQTIARAERFAPQEMPGDIALLGFACDEGVRRNKGRTGAGHGPEALRRALANMASHQGHDRCVDMGTISVDGEQLEAAHQALREAVAACQRAGKRTLVLGGGHETAFGHGAGVLDAFPGEKVGIINLDAHLDLRFAECASSGTPFRQLALECDAQQRGFHYTCIGVSRAANTQALWDEAARRQVAVVEDLAVLADFDTHVLPELERNIAQYDRLYLTIDLDVLPAREMPAVSAPAALGVPLAILLRIVEPLCRSGKLQAVDLVEFNPQFDIDGQGARAAARLAWQIAHWWR.

Residues His-130, Asp-155, His-157, Asp-159, Asp-246, and Asp-248 each contribute to the Mn(2+) site.

Belongs to the arginase family. It depends on Mn(2+) as a cofactor.

It catalyses the reaction N-formimidoyl-L-glutamate + H2O = formamide + L-glutamate. It functions in the pathway amino-acid degradation; L-histidine degradation into L-glutamate; L-glutamate from N-formimidoyl-L-glutamate (hydrolase route): step 1/1. Catalyzes the conversion of N-formimidoyl-L-glutamate to L-glutamate and formamide. The chain is Formimidoylglutamase from Klebsiella pneumoniae (strain 342).